Reading from the N-terminus, the 178-residue chain is Ribosome maturation factor RimM (178 aa).

Positions 99–178 (EGDYYWHDLI…TIEVDWDAGF (80 aa)) constitute a PRC barrel domain.

This sequence belongs to the RimM family. In terms of assembly, binds ribosomal protein uS19.

The protein localises to the cytoplasm. Functionally, an accessory protein needed during the final step in the assembly of 30S ribosomal subunit, possibly for assembly of the head region. Essential for efficient processing of 16S rRNA. May be needed both before and after RbfA during the maturation of 16S rRNA. It has affinity for free ribosomal 30S subunits but not for 70S ribosomes. This is Ribosome maturation factor RimM from Haemophilus influenzae (strain ATCC 51907 / DSM 11121 / KW20 / Rd).